The following is a 446-amino-acid chain: tRNA wybutosine-synthesizing protein 2 homolog (446 aa).

Residues Ser-208, Lys-215, Glu-255, and 283–284 (DN) contribute to the S-adenosyl-L-methionine site.

It belongs to the class I-like SAM-binding methyltransferase superfamily. TRM5/TYW2 family.

It carries out the reaction 4-demethylwyosine(37) in tRNA(Phe) + S-adenosyl-L-methionine = 4-demethyl-7-[(3S)-3-amino-3-carboxypropyl]wyosine(37) in tRNA(Phe) + S-methyl-5'-thioadenosine + H(+). The protein operates within tRNA modification; wybutosine-tRNA(Phe) biosynthesis. Its function is as follows. S-adenosyl-L-methionine-dependent transferase that acts as a component of the wybutosine biosynthesis pathway. Wybutosine is a hyper modified guanosine with a tricyclic base found at the 3'-position adjacent to the anticodon of eukaryotic phenylalanine tRNA. Catalyzes the transfer of the alpha-amino-alpha-carboxypropyl (acp) group from S-adenosyl-L-methionine to the C-7 position of 4-demethylwyosine (imG-14) to produce wybutosine-86. This chain is tRNA wybutosine-synthesizing protein 2 homolog (Trmt12), found in Mus musculus (Mouse).